Here is a 262-residue protein sequence, read N- to C-terminus: Phosphatidylglycerol--prolipoprotein diacylglyceryl transferase 1 (262 aa).

Helical transmembrane passes span 15–35, 40–60, 83–103, and 108–128; these read WYGI…SINA, LNFD…IIGA, QGGL…FIYC, and VDFL…QGIG. R129 is an a 1,2-diacyl-sn-glycero-3-phospho-(1'-sn-glycerol) binding site. A run of 3 helical transmembrane segments spans residues 169–189, 197–217, and 229–249; these read TFLY…IILY, GVVI…IEGL, and VAQL…IIIV.

It belongs to the Lgt family.

It is found in the cell membrane. The enzyme catalyses L-cysteinyl-[prolipoprotein] + a 1,2-diacyl-sn-glycero-3-phospho-(1'-sn-glycerol) = an S-1,2-diacyl-sn-glyceryl-L-cysteinyl-[prolipoprotein] + sn-glycerol 1-phosphate + H(+). Its pathway is protein modification; lipoprotein biosynthesis (diacylglyceryl transfer). Its function is as follows. Catalyzes the transfer of the diacylglyceryl group from phosphatidylglycerol to the sulfhydryl group of the N-terminal cysteine of a prolipoprotein, the first step in the formation of mature lipoproteins. In Clostridium perfringens (strain 13 / Type A), this protein is Phosphatidylglycerol--prolipoprotein diacylglyceryl transferase 1.